A 152-amino-acid polypeptide reads, in one-letter code: Small ribosomal subunit protein uS15 (152 aa).

Residues 1 to 20 are disordered; the sequence is MNKRRANGSSHSTRPVRTGS.

This sequence belongs to the universal ribosomal protein uS15 family. As to quaternary structure, part of the 30S ribosomal subunit.

In Metallosphaera sedula (strain ATCC 51363 / DSM 5348 / JCM 9185 / NBRC 15509 / TH2), this protein is Small ribosomal subunit protein uS15.